The sequence spans 211 residues: UPF0329 protein ECU07_1880/ECU10_0020 (211 aa).

The protein belongs to the UPF0329 family.

The sequence is that of UPF0329 protein ECU07_1880/ECU10_0020 from Encephalitozoon cuniculi (strain GB-M1) (Microsporidian parasite).